Consider the following 313-residue polypeptide: Aspartate carbamoyltransferase catalytic subunit (313 aa).

Arg-53 and Thr-54 together coordinate carbamoyl phosphate. Residue Lys-82 coordinates L-aspartate. Positions 103, 131, and 134 each coordinate carbamoyl phosphate. L-aspartate-binding residues include Arg-163 and Arg-224. Residues Leu-263 and Pro-264 each coordinate carbamoyl phosphate.

It belongs to the aspartate/ornithine carbamoyltransferase superfamily. ATCase family. Heterooligomer of catalytic and regulatory chains.

The enzyme catalyses carbamoyl phosphate + L-aspartate = N-carbamoyl-L-aspartate + phosphate + H(+). It functions in the pathway pyrimidine metabolism; UMP biosynthesis via de novo pathway; (S)-dihydroorotate from bicarbonate: step 2/3. Catalyzes the condensation of carbamoyl phosphate and aspartate to form carbamoyl aspartate and inorganic phosphate, the committed step in the de novo pyrimidine nucleotide biosynthesis pathway. This is Aspartate carbamoyltransferase catalytic subunit from Halorubrum lacusprofundi (strain ATCC 49239 / DSM 5036 / JCM 8891 / ACAM 34).